The chain runs to 176 residues: ATP-dependent protease subunit HslV (176 aa).

T6 is a catalytic residue. Positions 161, 164, and 167 each coordinate Na(+).

The protein belongs to the peptidase T1B family. HslV subfamily. In terms of assembly, a double ring-shaped homohexamer of HslV is capped on each side by a ring-shaped HslU homohexamer. The assembly of the HslU/HslV complex is dependent on binding of ATP.

It localises to the cytoplasm. It carries out the reaction ATP-dependent cleavage of peptide bonds with broad specificity.. Allosterically activated by HslU binding. Functionally, protease subunit of a proteasome-like degradation complex believed to be a general protein degrading machinery. This Aquifex aeolicus (strain VF5) protein is ATP-dependent protease subunit HslV.